Consider the following 196-residue polypeptide: Glutathione-specific gamma-glutamylcyclotransferase 1 (196 aa).

15–20 (IFGYGS) contacts substrate. Glutamate 95 acts as the Proton acceptor in catalysis.

The protein belongs to the gamma-glutamylcyclotransferase family. ChaC subfamily.

It is found in the cytoplasm. The protein localises to the cytosol. The protein resides in the golgi apparatus. Its subcellular location is the trans-Golgi network. The enzyme catalyses glutathione = L-cysteinylglycine + 5-oxo-L-proline. In terms of biological role, catalyzes the cleavage of glutathione into 5-oxo-L-proline and a Cys-Gly dipeptide. Acts specifically on glutathione, but not on other gamma-glutamyl peptides. Glutathione depletion is an important factor for apoptosis initiation and execution. Acts as a pro-apoptotic component of the unfolded protein response pathway by mediating the pro-apoptotic effects of the ATF4-ATF3-DDIT3/CHOP cascade. Negative regulator of Notch signaling pathway involved in embryonic neurogenesis: acts by inhibiting Notch cleavage by furin, maintaining Notch in an immature inactive form, thereby promoting neurogenesis in embryos. This Danio rerio (Zebrafish) protein is Glutathione-specific gamma-glutamylcyclotransferase 1.